The following is a 204-amino-acid chain: Double homeobox protein A (204 aa).

A DNA-binding region (homeobox 1) is located at residues 15–74; that stretch reads HRRCRTKFTEEQLKILINTFNQKPYPGYATKQKLALEINTEESRIQIWFQNRRARHGFQK. 2 disordered regions span residues 73–101 and 163–204; these read QKRP…SREA and EPVA…ARTW. Polar residues predominate over residues 81–90; that stretch reads LESSQSQGQD. Positions 101–160 form a DNA-binding region, homeobox 2; it reads ARRCRTTYSASQLHTLIKAFMKNPYPGIDSREELAKEIGVPESRVQIWFQNRRSRLLLQR. The segment covering 184–197 has biased composition (polar residues); sequence EDTQNGTNFTSDSH.

This sequence belongs to the paired homeobox family. As to expression, expressed in embryonic stem cells.

Its subcellular location is the nucleus. Transcription factor that acts as a repressor. The chain is Double homeobox protein A from Homo sapiens (Human).